A 418-amino-acid polypeptide reads, in one-letter code: Putative ion-transport protein YfeO (418 aa).

The next 12 helical transmembrane spans lie at 10-30 (LLLSLPAVAIGIASSLILIMV), 54-74 (DSPLWIIGVLTLTGIAVGLVI), 99-119 (ALPGLIVALILGLAGGVSLGP), 120-140 (EHPIMTVNIALAVAIGARLLP), 149-169 (ILASAGTIGALFGTPVAAALI), 186-206 (LFAPLMAAAAGALTTGLFFHP), 223-243 (ILSGAIVAAIAIAAGMVAVWC), 258-278 (VFVLGIGGLILGILGVIGGPV), 300-320 (DYFLLAVIKLAALVVAAASGF), 322-342 (GGRIFPAVFVGVALGLMLHEH), 343-363 (VPAVPAAITVSCAILGIVLVV), and 371-391 (LFMAAVVVPNTTLLPLLCIVM).

Belongs to the chloride channel (TC 2.A.49) family.

Its subcellular location is the cell membrane. The protein is Putative ion-transport protein YfeO of Escherichia coli O45:K1 (strain S88 / ExPEC).